Here is a 397-residue protein sequence, read N- to C-terminus: MNAGSDPVVIVSAARTIIGSFNGALAAVPVQDLGSTVIKEVLKRATVAPEDVSEVIFGHVLAAGCGQNPVRQASVGAGIPYSVPAWSCQMICGSGLKAVCLAVQSIGIGDSSIVVAGGMENMSKAPHLAYLRTGVKIGEMPLTDSILCDGLTDAFHNCHMGITAENVAKKWQVSREDQDKVAVLSQNRTENAQKAGHFDKEIVPVLVSTRKGLIEVKTDEFPRHGSNIEAMSKLKPYFLTDGTGTVTPANASGINDGAAAVVLMKKSEADKRGLTPLARIVSWSQVGVEPSIMGIGPIPAIKQAVTKAGWSLEDVDIFEINEAFAAVSAAIVKELGLNPEKVNIEGGAIALGHPLGASGCRILVTLLHTLERMGRSRGVAALCIGGGMGIAMCVQRE.

Met-1 is modified (N-acetylmethionine). Cys-92 (acyl-thioester intermediate) is an active-site residue. Position 200 is an N6-acetyllysine (Lys-200). The CoA site is built by Arg-223 and Ser-226. N6-acetyllysine is present on residues Lys-233 and Lys-235. Ser-252 lines the CoA pocket. Cys-383 serves as the catalytic Proton donor/acceptor.

Belongs to the thiolase-like superfamily. Thiolase family. Homotetramer.

It is found in the cytoplasm. The protein resides in the cytosol. It catalyses the reaction 2 acetyl-CoA = acetoacetyl-CoA + CoA. It participates in lipid metabolism; fatty acid metabolism. Its function is as follows. Involved in the biosynthetic pathway of cholesterol. The chain is Acetyl-CoA acetyltransferase, cytosolic (ACAT2) from Homo sapiens (Human).